The chain runs to 189 residues: Endoribonuclease YbeY (189 aa).

Over residues 1-10 the composition is skewed to polar residues; sequence MKERSSSPGT. The tract at residues 1–23 is disordered; sequence MKERSSSPGTPDSGRRARPKPAK. Zn(2+) contacts are provided by His-141, His-145, and His-151.

Belongs to the endoribonuclease YbeY family. The cofactor is Zn(2+).

The protein localises to the cytoplasm. Single strand-specific metallo-endoribonuclease involved in late-stage 70S ribosome quality control and in maturation of the 3' terminus of the 16S rRNA. This chain is Endoribonuclease YbeY, found in Nitrosospira multiformis (strain ATCC 25196 / NCIMB 11849 / C 71).